The following is an 83-amino-acid chain: Hainantoxin-III 9 (83 aa).

The first 21 residues, 1 to 21 (MKASMFLALAGLALLFVVCYA), serve as a signal peptide directing secretion. A propeptide spanning residues 22-48 (SESEEKEFPIELLSKIFAVDVFKGEER) is cleaved from the precursor. Cystine bridges form between C50–C65, C57–C70, and C64–C77. L81 carries the leucine amide modification.

Belongs to the neurotoxin 10 (Hwtx-1) family. 15 (Hntx-3) subfamily. As to quaternary structure, monomer. Expressed by the venom gland.

It localises to the secreted. Its function is as follows. Selective antagonist of neuronal tetrodotoxin (TTX)-sensitive voltage-gated sodium channels (IC(50)=1270 nM on Nav1.1/SCN1A, 270 nM on Nav1.2/SCN2A, 491 nM on Nav1.3/SCN3A and 232 nM on Nav1.7/SCN9A). This toxin suppress Nav1.7 current amplitude without significantly altering the activation, inactivation, and repriming kinetics. Short extreme depolarizations partially activate the toxin-bound channel, indicating voltage-dependent inhibition of this toxin. This toxin increases the deactivation of the Nav1.7 current after extreme depolarizations. The toxin-Nav1.7 complex is gradually dissociated upon prolonged strong depolarizations in a voltage-dependent manner, and the unbound toxin rebinds to Nav1.7 after a long repolarization. Moreover, analysis of chimeric channels showed that the DIIS3-S4 linker is critical for toxin binding to Nav1.7. These data are consistent with this toxin interacting with Nav1.7 site 4 and trapping the domain II voltage sensor in the closed state. The chain is Hainantoxin-III 9 from Cyriopagopus hainanus (Chinese bird spider).